The following is a 314-amino-acid chain: Ribonuclease Z (314 aa).

Residues H62, H64, D66, H67, H144, D215, and H273 each contribute to the Zn(2+) site. The active-site Proton acceptor is D66.

This sequence belongs to the RNase Z family. As to quaternary structure, homodimer. Zn(2+) serves as cofactor.

It catalyses the reaction Endonucleolytic cleavage of RNA, removing extra 3' nucleotides from tRNA precursor, generating 3' termini of tRNAs. A 3'-hydroxy group is left at the tRNA terminus and a 5'-phosphoryl group is left at the trailer molecule.. Zinc phosphodiesterase, which displays some tRNA 3'-processing endonuclease activity. Probably involved in tRNA maturation, by removing a 3'-trailer from precursor tRNA. The sequence is that of Ribonuclease Z from Prochlorococcus marinus (strain NATL1A).